The following is a 78-amino-acid chain: Ferredoxin 7Fe (78 aa).

4Fe-4S ferredoxin-type domains lie at 2 to 29 (AYVITEPCIGTKDASCVEVCPVDCIHEG) and 31 to 60 (DQYYIDPDVCIDCGACEAVCPVSAIYHEDF). 2 residues coordinate [3Fe-4S] cluster: C9 and C17. C21, C40, C43, and C46 together coordinate [4Fe-4S] cluster. A [3Fe-4S] cluster-binding site is contributed by C50.

Monomer. [4Fe-4S] cluster serves as cofactor. Requires [3Fe-4S] cluster as cofactor.

The chain is Ferredoxin 7Fe (fdxA) from Hydrogenibacillus schlegelii (Bacillus schlegelii).